The primary structure comprises 246 residues: MTTDPSVKLKSAKDSLVSSLFELSKAANQTASSIVDFYNAIGDDEEEKIEAFTTLTESLQTLTSGVNHLHGISSELVNPIDDDKDAIIAAPVKAVRRKIERDPNAPKKPLTVFFAYSAYVRQELREDRQKAGLPPLSSTEITQEISKKWKELSDNEKEKWKQAYNVELENYQREKSKYLEAKKNGTLPPASLENGPTHAPVPIPFSLQHAAEPPVEKRPHDDDGSSEKKKKKKKKDKKKDKSNSSI.

Residues 106–179 (PKKPLTVFFA…NYQREKSKYL (74 aa)) constitute a DNA-binding region (HMG box). Residues 179-246 (LEAKKNGTLP…KKKDKSNSSI (68 aa)) are disordered. Residues 214–227 (PVEKRPHDDDGSSE) are compositionally biased toward basic and acidic residues. Residues 228-238 (KKKKKKKKDKK) show a composition bias toward basic residues.

In terms of assembly, interacts with FPR1. Interacts with an unidentified DNA helicase. Associates with rDNA.

It localises to the nucleus. The protein resides in the nucleolus. DNA-binding protein that is probably part of the rDNA transcription apparatus. Acts synergetically with the RPA49 subunit of RNA polymerase I during rDNA transcription. May participate in mutagenesis control. This chain is High mobility group protein 1 (HMO1), found in Saccharomyces cerevisiae (strain ATCC 204508 / S288c) (Baker's yeast).